The chain runs to 709 residues: MFANPVVKSFQYGNHTVTLETGVIARQATAAVMASMDDTSVFVSVVAKKEAVPGQDFFPLTVNYQERTYAAGKIPGGFFKREGRPSEAETLTARLIDRPIRPLFPDAFKNEVQVIATVVSINPEVNPDMITMIGTSAALAIAGIPFNGPIGAARVGHINGELVLNPSNTELENSKLDLVVSGTEGAVLMVESEADNLTEEEMLSAVVFGHDQQQVVIKAINEFAAEVATPAWDWVAPEENTVLNSRIAELAEAKLVEAYQITEKMTRYDRIHEIAAEVNEVLVSENEDVNLKEVHTIFHDLEKTVVRRSIIAGNPRIDGREKDMVRALDVRTGVLPRTHGSSLFTRGETQALVTATLGTQRDAQIIDSLMGEKKDHFLLHYNFPPYCVGETGFVGSPKRREIGHGKLAKRGIQAVMPSIEEFPYTVRVVSEITESNGSSSMASVCGTSLALMDAGVPIKASVAGIAMGLVKEGDDFVVLSDILGDEDHLGDMDFKVAGTNEGITALQMDIKIEGITKEIMQIALNQAQGARKHILKVMDEAISGAREDISEFAPRIHTMKISSDKIKDVIGKGGAVIRALCEETGTTIEIEDDGTIKIAATEGAAAKEAIRRIEEITAEVEVGKIYTGKVMRIVDFGAFVTVLGPKEGLVHISQIAEERIEKVADHLQVGQEVKTKVLEIDRQGRIRLSIKEANAELNPAPAAEAKDAE.

Mg(2+) is bound by residues aspartate 487 and aspartate 493. The KH domain occupies proline 554–isoleucine 613. The region spanning glycine 623–lysine 691 is the S1 motif domain.

The protein belongs to the polyribonucleotide nucleotidyltransferase family. Component of the RNA degradosome, which is a multiprotein complex involved in RNA processing and mRNA degradation. It depends on Mg(2+) as a cofactor.

The protein resides in the cytoplasm. It carries out the reaction RNA(n+1) + phosphate = RNA(n) + a ribonucleoside 5'-diphosphate. In terms of biological role, involved in mRNA degradation. Catalyzes the phosphorolysis of single-stranded polyribonucleotides processively in the 3'- to 5'-direction. This Aliivibrio fischeri (strain MJ11) (Vibrio fischeri) protein is Polyribonucleotide nucleotidyltransferase.